We begin with the raw amino-acid sequence, 742 residues long: Probable serine/threonine-protein kinase PkwA (742 aa).

A Protein kinase domain is found at 16-266 (YRLVSRLGAG…TAELLAQLST (251 aa)). ATP contacts are provided by residues 22-30 (LGAGGMGQV) and lysine 44. Catalysis depends on aspartate 138, which acts as the Proton acceptor. The segment at 266–394 (TDHTGDDWPP…PWSPPRVQPP (129 aa)) is disordered. Pro residues predominate over residues 301-318 (EPPPPSHGPPRPSEPLPD). Basic and acidic residues predominate over residues 343–356 (LEEKPIQVIHEPER). Over residues 377–392 (PRPAAPQPPWSPPRVQ) the composition is skewed to pro residues. WD repeat units follow at residues 455-496 (ILTT…ELHT), 497-538 (LEGH…ERAV), 539-580 (FEGH…EHAV), 581-621 (LKGH…KERD), 622-663 (VLQA…ALHT), 664-705 (FEGH…EHTT), and 706-742 (LEGH…IATE).

This sequence belongs to the protein kinase superfamily. Ser/Thr protein kinase family.

It catalyses the reaction L-seryl-[protein] + ATP = O-phospho-L-seryl-[protein] + ADP + H(+). It carries out the reaction L-threonyl-[protein] + ATP = O-phospho-L-threonyl-[protein] + ADP + H(+). Functionally, may play a regulatory role during the complex growth cycle and in secondary metabolite production. This chain is Probable serine/threonine-protein kinase PkwA (pkwA), found in Thermomonospora curvata.